The chain runs to 135 residues: MVKFLKQNKAVILLQGRYAGKKAVIIKSFDDGNRDRPYGHCLVAGLKKYPSKVIRKDSAKKTAKKSRVKCFIKLVNYQHLMPTRYTLDVDLKEVATLDALQSKDKKVAALKEAKAKLEERFKTGKNRWFFTKLRF.

The protein belongs to the eukaryotic ribosomal protein eL27 family.

The chain is Large ribosomal subunit protein eL27x (RPL27C) from Arabidopsis thaliana (Mouse-ear cress).